The chain runs to 62 residues: Large ribosomal subunit protein bL28 (62 aa).

It belongs to the bacterial ribosomal protein bL28 family.

The polypeptide is Large ribosomal subunit protein bL28 (Moorella thermoacetica (strain ATCC 39073 / JCM 9320)).